The primary structure comprises 561 residues: Arginine--tRNA ligase (561 aa).

The 'HIGH' region signature appears at 128-138; sequence ANPTGPLHVGH.

Belongs to the class-I aminoacyl-tRNA synthetase family. Monomer.

It localises to the cytoplasm. The enzyme catalyses tRNA(Arg) + L-arginine + ATP = L-arginyl-tRNA(Arg) + AMP + diphosphate. This is Arginine--tRNA ligase from Marinobacter nauticus (strain ATCC 700491 / DSM 11845 / VT8) (Marinobacter aquaeolei).